The sequence spans 90 residues: Probable Fe(2+)-trafficking protein (90 aa).

The protein belongs to the Fe(2+)-trafficking protein family.

Could be a mediator in iron transactions between iron acquisition and iron-requiring processes, such as synthesis and/or repair of Fe-S clusters in biosynthetic enzymes. The protein is Probable Fe(2+)-trafficking protein of Bordetella avium (strain 197N).